The sequence spans 1666 residues: MAQQLPIRFSEVLQLASVGIQPSSFGFANVTLESDKYVCVRDNPNGVNQVVIVDLEDPSNVLRRPISADSVILHPKKKIIALKAQRQLQVFDLEAKAKINSYVMNQDVVYWTWISDSVIGMVTDTSVFHWTVSGSDPVKMFDRHSSLNGTQIISYKSNYNEEWFTLIGISSRDNRIAGNLQLYSKKRKVSQPLESHASAFAVIQPEGVDHEVQVLALASRLPTGSKLSIVEVDRNPNNPAFATKTVDLFFPPEAVNDFPIAIEIGSTYNVAYVVTKYGFIHVYDLETAKCIYMNRVSGESIFVTTAHKSVNGLMAINRKGQVLSVSINPETIIPYILSNLNDPGLAVRMASHANLPGADNLYMQQFQQLMAQGNYSEAAKVAASSPRGILRTSQVIDQFKLIQAAPGQIAPILQYFGTLLDKGPLNEHETIELARPVLAQNRIQLLEKWYGENKLACTEALGDLVKPYNTPFALKIYETANVPNKVVMCLSELGDFGKLATYTSQQNITPDYVSLLQNLVRVNPDQAAEFATQMFNSNPSINLEKIVDIFMSQNLVQQATAFLLDALKDDNPEHSHLQTRLLEINLINAPQVADAILGNQMFTHFDRAVIASLCERAGLVQRALELYDKPADIKRVIVHSNLLNPEWLMNYFSRFSPDEVYDYLREMLRSNLRQNLQIVVQIATRYSDLVGAQRIIEMFEKFKTFEGLYYYLGSIVNITEDPEVVYKYIQAACLMNQFTEVERICRDNNVYNPEKVKNLLKEAKLADQLPLILVCDRYDFVNDLVFYLFRNNMFQFIEIYVQRINPSKTPQVVGALLDIDCDEELVQNLLMSVVGQVPVDELVEEVERRNRLKLLLPYLESLLQSGSQDRAIYDALAKIYIDSNNNPEVFLKENNFYDTLTVGKYCEKRDPYLAFIAYEKGGNDTEIINLCNENSMFKQLARYLLKRSDSNLWSEVLQDSAYRRPLLDQVIATAVPESSDPEAVSIVVKALMEVDLPSQLIELLEKIVLQPSSFSENANLQNLLFLTAIKADKSRVMEYIDKLDKYDVDEIAEIAIENGLYEEAFRIYKIHNKHEQAMKVLVEDIVSLDRAQDYAETVEQPEVWSRLAKAQLDGIRIPDAIESYLKADDPSNYSEVIELASRAGKYEELIKYLLMARSKMHEPDVDSALLIAYAKTNQLTEMETFLIGSNVADVKAVGDECFESKNYEAAKLMYSSISNWSMLATTLVYLGEYQGAVDCARKANSIKVWKQVGTACIDKREFRLAQICGLNLIVHAEELPGLIRLYEERGYFEEVISLMEAGLGLERAHMAFYTELAILYAKYKPERMMEHLKLFWGRLNMAKVIRACDQMHLWNEAVFLYVHDQSYDNAAAVMMEQPEAFDHQSFKDIIVHVANLELYYRALNFYLEQHPMLLTDLLAALTPRIDHPRVIRIFEKSENTPLILNFMVAIQHLNIQAVNHAYNDLLIEMEDYQSLQDSIENYDHFDAIALARRLEKHSLLEFRRIAAYIYRKNKRWTQSIELSKQDRFYKDAIITARDSDQTTIAEDLMKYFVEIGNYECFAAILYTCYHLLRNDLVMEISWRKGLQDYAYPYFINFQCEMFSKVLNLEKDLKDRQAVKSEEESASTIGAGILGNTLMLTQGPMANNNDQFDSFQQASPMPRLGNF.

WD40-like repeat regions lie at residues 24–67 (SFGF…RPIS), 68–107 (ADSVILHPKKKIIALKAQRQLQVFDLEAKAKINSYVMNQD), 108–148 (VVYW…SSLN), 149–194 (GTQI…QPLE), 195–255 (SHAS…PEAV), 256–299 (NDFP…VSGE), and 300–328 (SIFVTTAHKSVNGLMAINRKGQVLSVSIN). T392 is subject to Phosphothreonine. S393 is subject to Phosphoserine. CHCR repeat units lie at residues 534 to 680 (MFNS…QIVV), 683 to 825 (ATRY…DEEL), 830 to 969 (LMSV…LLDQ), 975 to 1120 (VPES…IPDA), 1124 to 1265 (YLKA…FRLA), 1270 to 1415 (LNLI…MLLT), and 1418 to 1561 (LAAL…YECF).

It belongs to the clathrin heavy chain family. In terms of assembly, clathrin triskelions, composed of 3 heavy chains and 3 light chains, are the basic subunits of the clathrin coat.

Its subcellular location is the cytoplasmic vesicle membrane. It localises to the membrane. The protein resides in the coated pit. Functionally, clathrin is the major protein of the polyhedral coat of coated pits and vesicles. The sequence is that of Probable clathrin heavy chain (chc1) from Schizosaccharomyces pombe (strain 972 / ATCC 24843) (Fission yeast).